Here is a 765-residue protein sequence, read N- to C-terminus: Single-minded homolog 1 (765 aa).

The bHLH domain occupies 1-53 (MKEKSKNAARTRREKENSEFYELAKLLPLPSAITSQLDKASIIRLTTSYLKMR). PAS domains lie at 77–147 (GREL…QPYH) and 218–288 (PPSA…LVKG). Residues 292 to 335 (TKYYRFLAKQGGWVWVQSYATIVHNSRSSRPHCIVSVNYVLTDT) form the PAC domain. The Single-minded C-terminal domain maps to 336–765 (EYKGLQLSLD…GTSVIITNGS (430 aa)). Composition is skewed to low complexity over residues 352–365 (PTFSYTSSSTPTIS) and 373–385 (SRLSSSKSKSRTS). Disordered regions lie at residues 352 to 428 (PTFS…PGSQ) and 527 to 560 (WDEDSVVSSPDPGSASESGDRYRTEQYQNSPHEP). Residues 368 to 387 (RKGAKSRLSSSKSKSRTSPY) carry the Nuclear localization signal motif. Basic and acidic residues predominate over residues 394-404 (HTERSESDHDS).

As to quaternary structure, efficient DNA binding requires dimerization with another bHLH protein. Heterodimer; forms a heterodimer with ARNT, ARNT2. Detected in lung, skeletal muscle and kidney. During fetal development it is found in the CNS, developing kidney, mesodermal and endodermal tissues, including developing somites, mesonephric duct, and foregut.

Its subcellular location is the nucleus. In terms of biological role, transcriptional factor that may have pleiotropic effects during embryogenesis and in the adult. This is Single-minded homolog 1 (Sim1) from Mus musculus (Mouse).